The following is a 121-amino-acid chain: Putative RNase MJ1216 (121 aa).

Residues arginine 76 and histidine 81 contribute to the active site. Positions 76–83 match the RX(4)HXY motif motif; it reads RDKLIHQY. Tyrosine 83 is modified (O-di-AMP-tyrosine).

Belongs to the HepT RNase toxin family. As to quaternary structure, homodimer, probably forms a complex with antitoxin MJ1215 or MJ1217. Post-translationally, modified by antitoxin MJ1215 or MJ1217; probably at least 2 successive AMPylation events occur on Tyr-83.

In terms of biological role, probable toxic component of a putative type VII toxin-antitoxin (TA) system, probably an RNase. Probably neutralized by antitoxin MJ1215 or MJ1217. Neutralization may be due to AMPylation by antitoxin. The sequence is that of Putative RNase MJ1216 from Methanocaldococcus jannaschii (strain ATCC 43067 / DSM 2661 / JAL-1 / JCM 10045 / NBRC 100440) (Methanococcus jannaschii).